A 387-amino-acid polypeptide reads, in one-letter code: Gibberellic acid methyltransferase 2 (387 aa).

Tyr-33 contacts S-adenosyl-L-homocysteine. Gln-40 contacts gibberellin A4. S-adenosyl-L-homocysteine-binding residues include Cys-74, Asn-79, Asp-113, Leu-114, Ser-146, and Phe-147. Positions 167 and 168 each coordinate gibberellin A4. The Mg(2+) site is built by Asn-185, Arg-275, Asp-276, Phe-278, and Asn-279.

It belongs to the methyltransferase superfamily. Type-7 methyltransferase family. SABATH subfamily. Mg(2+) serves as cofactor. Expressed in siliques and germinating seeds. Not detected in leaves, stems, flowers and roots.

It carries out the reaction gibberellin A4 + S-adenosyl-L-methionine = O-methyl gibberellin A4 + S-adenosyl-L-homocysteine. With respect to regulation, down-regulated by Zn(2+), Cu(2+) and Fe(3+). No effect of K(+), NH(4+), Na(+), Ca(2+), Mg(2+), Mn(2+) and Fe(2+). Functionally, methylates the carboxyl group of several gibberellins (GAs). Substrate preference is GA4 &gt; GA34 &gt; GA9 &gt; GA3 &gt; GA1 &gt; GA51 &gt; GA20. No activity with diterpenes abietic acid and ent-kaurenoic acid. The protein is Gibberellic acid methyltransferase 2 (GAMT2) of Arabidopsis thaliana (Mouse-ear cress).